We begin with the raw amino-acid sequence, 278 residues long: UPF0276 protein Swit_4400 (278 aa).

Belongs to the UPF0276 family.

This chain is UPF0276 protein Swit_4400, found in Rhizorhabdus wittichii (strain DSM 6014 / CCUG 31198 / JCM 15750 / NBRC 105917 / EY 4224 / RW1) (Sphingomonas wittichii).